Reading from the N-terminus, the 490-residue chain is Cis-aconitate decarboxylase (490 aa).

This sequence belongs to the PrpD family.

It localises to the mitochondrion. The enzyme catalyses cis-aconitate + H(+) = itaconate + CO2. Its function is as follows. Involved in the production of itaconic acid, a soluble unsaturated dicarboxylic acid mainly produced from sugars. The protein is Cis-aconitate decarboxylase (cad1) of Aspergillus terreus.